We begin with the raw amino-acid sequence, 331 residues long: Flagellar P-ring protein (331 aa).

Residues 1 to 22 (MRKVTIFIIIIVALTGFGSVRI) form the signal peptide.

Belongs to the FlgI family. As to quaternary structure, the basal body constitutes a major portion of the flagellar organelle and consists of four rings (L,P,S, and M) mounted on a central rod.

It localises to the periplasm. It is found in the bacterial flagellum basal body. Assembles around the rod to form the L-ring and probably protects the motor/basal body from shearing forces during rotation. The protein is Flagellar P-ring protein of Pseudothermotoga lettingae (strain ATCC BAA-301 / DSM 14385 / NBRC 107922 / TMO) (Thermotoga lettingae).